A 34-amino-acid polypeptide reads, in one-letter code: Mu-conotoxin GS (34 aa).

3 disulfide bridges follow: Cys-2/Cys-14, Cys-9/Cys-19, and Cys-13/Cys-27. 2 positions are modified to 4-hydroxyproline: Pro-10 and Pro-11. Residue Glu-32 is modified to 4-carboxyglutamate.

In terms of tissue distribution, expressed by the venom duct.

The protein resides in the secreted. Mu-conotoxins block voltage-gated sodium channels (Nav). No effect was observed upon injections into mice and goldfish (25 ug). The chain is Mu-conotoxin GS from Conus geographus (Geography cone).